The primary structure comprises 375 residues: Trans-enoyl reductase BOA5 (375 aa).

Residues 1–16 (MQAVIQTGPGTLQLTE) show a composition bias toward polar residues. Residues 1 to 21 (MQAVIQTGPGTLQLTENVPKP) are disordered. 42–45 (SDWK) lines the NADP(+) pocket. Residue 121–128 (VGIVTTGL) coordinates substrate. Positions 147-168 (GSAAPQKTRVGPRGWSGGDALT) are disordered. Residues 185 to 188 (STST), 208 to 211 (SPHN), Y226, and 273 to 274 (LD) contribute to the NADP(+) site. 294-298 (ALTIF) is a substrate binding site. Position 363-364 (363-364 (VS)) interacts with NADP(+).

It belongs to the zinc-containing alcohol dehydrogenase family. In terms of assembly, monomer.

The protein operates within polyketide biosynthesis. In terms of biological role, trans-enoyl reductase; part of the gene cluster A that mediates the biosynthesis of botcinic acid and its botcinin derivatives, acetate-derived polyketides that contribute to virulence when combined with the sesquiterpene botrydial. Botcinic acid and its derivatives have been shown to induce chlorosis and necrosis during host plant infection, but also have antifungal activities. Two polyketide synthases, BOA6 and BOA9, are involved in the biosynthesis of botcinins. BOA6 mediates the formation of the per-methylated tetraketide core by condensation of four units of malonyl-CoA with one unit of acetyl-CoA, which would be methylated in activated methylene groups to yield a bicyclic acid intermediate that could then either be converted to botrylactone derivatives or lose the starter acetate unit through a retro-Claisen type C-C bond cleavage to yield botcinin derivatives. The second polyketide synthase, BOA9, is probably required for the biosynthesis of the tetraketide side chain of botcinins. The methyltransferase (MT) domain within BOA6 is probably responsible for the incorporation of four methyl groups. The trans-enoyl reductase BOA5 might take over the enoyl reductase function of BOA6 that misses an ER domain. The monooxygenases BOA2, BOA3 and BOA4 might be involved in further hydroxylations at C4, C5 and C8, whereas BOA7, close to BOA9, could potentially be involved in the hydroxylation at C4 in the side chain of botcinins. This chain is Trans-enoyl reductase BOA5, found in Botryotinia fuckeliana (strain B05.10) (Noble rot fungus).